The chain runs to 550 residues: Probable acyl-activating enzyme 6 (550 aa).

It belongs to the ATP-dependent AMP-binding enzyme family. As to expression, expressed at low levels in roots, leaves, stems and developing seeds.

May act as an acid--thiol ligase that activates carboxylic acids by forming acyl-CoAs. The chain is Probable acyl-activating enzyme 6 (AAE6) from Arabidopsis thaliana (Mouse-ear cress).